Consider the following 308-residue polypeptide: Acetylglutamate kinase (308 aa).

Substrate contacts are provided by residues Gly-64–Gly-65, Arg-86, and Asn-192.

The protein belongs to the acetylglutamate kinase family. ArgB subfamily.

Its subcellular location is the cytoplasm. The enzyme catalyses N-acetyl-L-glutamate + ATP = N-acetyl-L-glutamyl 5-phosphate + ADP. The protein operates within amino-acid biosynthesis; L-arginine biosynthesis; N(2)-acetyl-L-ornithine from L-glutamate: step 2/4. Its function is as follows. Catalyzes the ATP-dependent phosphorylation of N-acetyl-L-glutamate. In Myxococcus xanthus (strain DK1622), this protein is Acetylglutamate kinase.